A 163-amino-acid polypeptide reads, in one-letter code: Urease accessory protein UreE (163 aa).

The interval 130–163 (PFEPEPGAYGGGHGHTHSHDHSHQHDPAGHAHEH) is disordered. Over residues 146–163 (HSHDHSHQHDPAGHAHEH) the composition is skewed to basic and acidic residues.

It belongs to the UreE family.

It is found in the cytoplasm. Functionally, involved in urease metallocenter assembly. Binds nickel. Probably functions as a nickel donor during metallocenter assembly. This Alkalilimnicola ehrlichii (strain ATCC BAA-1101 / DSM 17681 / MLHE-1) protein is Urease accessory protein UreE.